The chain runs to 2774 residues: Teneurin-2 (2774 aa).

The 375-residue stretch at 1-375 (MDVKDRRHRS…KPSKYCSWKC (375 aa)) folds into the Teneurin N-terminal domain. The Cytoplasmic portion of the chain corresponds to 1 to 379 (MDVKDRRHRS…YCSWKCAALS (379 aa)). Phosphoserine occurs at positions 90 and 124. The tract at residues 111 to 271 (TGSDADSDTE…HHHSSANSLN (161 aa)) is disordered. Residues 141 to 155 (SSGLSSRENSALTLT) show a composition bias toward polar residues. Phosphothreonine is present on Thr155. Ser157 carries the phosphoserine modification. Residues 159–168 (NENKSDDENG) show a composition bias toward basic and acidic residues. A compositionally biased stretch (low complexity) spans 176 to 188 (SPSLLPSAQLPSS). A compositionally biased stretch (polar residues) spans 202–211 (DSNTSHQIMD). Residues 229–240 (SGPQQASSSGPP) show a composition bias toward low complexity. The chain crosses the membrane as a helical span at residues 380-400 (AIAAALLLAILLAYFIAMHLL). At 401-2774 (GLNWQLQPAD…FLRQNEMGKR (2374 aa)) the chain is on the extracellular side. N-linked (GlcNAc...) asparagine glycosylation is found at Asn443 and Asn482. 8 EGF-like domains span residues 575 to 603 (DCPR…ADCA), 598 to 634 (LGAD…AECD), 636 to 668 (PMNQ…EHCE), 669 to 701 (EVDC…NCEL), 702 to 735 (ARVQ…PDCS), 738 to 766 (VCSV…AACD), 769 to 797 (VCHP…EHCT), and 808 to 841 (DGCP…PGCN). 22 disulfides stabilise this stretch: Cys576/Cys586, Cys580/Cys591, Cys593/Cys602, Cys611/Cys622, Cys624/Cys633, Cys640/Cys651, Cys645/Cys656, Cys658/Cys667, Cys672/Cys683, Cys677/Cys688, Cys690/Cys699, Cys710/Cys723, Cys725/Cys734, Cys739/Cys749, Cys743/Cys754, Cys756/Cys765, Cys770/Cys780, Cys774/Cys785, Cys787/Cys796, Cys810/Cys820, Cys814/Cys829, and Cys831/Cys840. 3 N-linked (GlcNAc...) asparagine glycosylation sites follow: Asn925, Asn948, and Asn1267. 5 NHL repeats span residues 1272 to 1316 (LELR…VKSL), 1342 to 1386 (ARCG…NGII), 1401 to 1452 (LSCD…IAGR), 1474 to 1501 (LESA…INRL), and 1530 to 1573 (CYSG…VSKN). One copy of the YD 1 repeat lies at 1583–1602 (YEAASPGEQELYVFNADGIH). N-linked (GlcNAc...) asparagine glycosylation occurs at Asn1616. YD repeat units follow at residues 1619–1639 (YSTD…LKIR), 1682–1701 (YDGN…WTTF), and 1702–1724 (YDYD…TSLH). N-linked (GlcNAc...) asparagine glycosylation is found at Asn1712, Asn1749, Asn1773, Asn1807, and Asn1892. 18 YD repeats span residues 1895–1914 (YFFN…ERTD), 1936–1954 (YLDK…YIFE), 1955–1975 (YDSS…HSMS), 1982–1999 (YIRN…VIFD), 2000–2021 (YSDD…VFYK), 2022–2039 (YGKL…TAVT), 2042–2062 (YDET…FSCT), 2065–2085 (YRKI…EGMV), 2093–2113 (YHDN…TPLP), 2119–2136 (YDEI…GVIY), 2137–2163 (YDIN…IKEV), 2165–2178 (YEMF…MTVQ), 2179–2202 (YDSM…TKYT), 2205–2225 (YDGD…WRYS), 2226–2246 (YDLN…LMPL), 2248–2268 (YDLR…DDDG), 2280–2300 (YNSK…SVQY), and 2302–2322 (YDGV…LQYF). Asn1993 is a glycosylation site (N-linked (GlcNAc...) asparagine). Asn2197 carries N-linked (GlcNAc...) asparagine glycosylation. Asn2337 carries N-linked (GlcNAc...) asparagine glycosylation. The YD 23 repeat unit spans residues 2348–2389 (YDLQGHLFAMESSSGEEYYVASDNTGTPLAVFSINGLMIKQL). The N-linked (GlcNAc...) asparagine glycan is linked to Asn2648.

Belongs to the tenascin family. Teneurin subfamily. Homodimer; disulfide-linked. Heterodimer with either TENM1 or TENM3. May also form heterodimer with TENM4. Isoform 2 (C-terminal globular domain) interacts with ADGRL1 isoform 2. Post-translationally, derives from the membrane form by proteolytic processing. Derives from the plasma membrane form by proteolytic cleavage and translocates to the nucleus. Homophilic binding of the C-terminal extracellular domain stimulates its proteolytic cleavage and release in the cytoplasmic. Is subjected to rapid degradation by the proteasome pathway. As to expression, highly expressed in heart, followed by brain, liver, kidney and fetal brain and weakly expressed in lung and testis. No expression was detected in skeletal muscle, pancreas, spleen, ovary and fetal liver.

The protein resides in the cell membrane. The protein localises to the presynaptic cell membrane. It is found in the postsynaptic cell membrane. Its subcellular location is the endoplasmic reticulum. It localises to the golgi apparatus. The protein resides in the synapse. The protein localises to the cell projection. It is found in the dendritic spine. Its subcellular location is the filopodium. It localises to the growth cone. The protein resides in the nucleus. The protein localises to the PML body. Its function is as follows. Involved in neural development, regulating the establishment of proper connectivity within the nervous system. Acts as a ligand of the ADGRL1 and ADGRL3 receptors that are expressed at the surface of adjacent cells. Promotes the formation of filopodia and enlarged growth cone in neuronal cells. Mediates axon guidance and homophilic and heterophilic cell-cell adhesion. May function as a cellular signal transducer. Functionally, acts as a ligand of the ADGRL1 receptor. Mediates axon guidance and heterophilic cell-cell adhesion. In terms of biological role, induces gene transcription inhibition. The protein is Teneurin-2 (TENM2) of Homo sapiens (Human).